A 215-amino-acid polypeptide reads, in one-letter code: 7-methyl-GTP pyrophosphatase (215 aa).

Asp79 serves as the catalytic Proton acceptor.

The protein belongs to the Maf family. YceF subfamily. A divalent metal cation serves as cofactor.

It is found in the cytoplasm. It catalyses the reaction N(7)-methyl-GTP + H2O = N(7)-methyl-GMP + diphosphate + H(+). Functionally, nucleoside triphosphate pyrophosphatase that hydrolyzes 7-methyl-GTP (m(7)GTP). May have a dual role in cell division arrest and in preventing the incorporation of modified nucleotides into cellular nucleic acids. This chain is 7-methyl-GTP pyrophosphatase, found in Burkholderia mallei (strain ATCC 23344).